Reading from the N-terminus, the 330-residue chain is Phenylalanine--tRNA ligase alpha subunit (330 aa).

Residue Glu246 participates in Mg(2+) binding.

Belongs to the class-II aminoacyl-tRNA synthetase family. Phe-tRNA synthetase alpha subunit type 1 subfamily. As to quaternary structure, tetramer of two alpha and two beta subunits. Requires Mg(2+) as cofactor.

The protein localises to the cytoplasm. It carries out the reaction tRNA(Phe) + L-phenylalanine + ATP = L-phenylalanyl-tRNA(Phe) + AMP + diphosphate + H(+). The chain is Phenylalanine--tRNA ligase alpha subunit from Wolinella succinogenes (strain ATCC 29543 / DSM 1740 / CCUG 13145 / JCM 31913 / LMG 7466 / NCTC 11488 / FDC 602W) (Vibrio succinogenes).